The following is a 104-amino-acid chain: Large ribosomal subunit protein bL21c (104 aa).

The protein belongs to the bacterial ribosomal protein bL21 family. As to quaternary structure, part of the 50S ribosomal subunit.

It localises to the plastid. The protein resides in the chloroplast. Its function is as follows. This protein binds to 23S rRNA. The chain is Large ribosomal subunit protein bL21c from Pyropia yezoensis (Susabi-nori).